The sequence spans 401 residues: Mannonate dehydratase (401 aa).

The protein belongs to the mannonate dehydratase family. It depends on Fe(2+) as a cofactor. Mn(2+) serves as cofactor.

The enzyme catalyses D-mannonate = 2-dehydro-3-deoxy-D-gluconate + H2O. It functions in the pathway carbohydrate metabolism; pentose and glucuronate interconversion. In terms of biological role, catalyzes the dehydration of D-mannonate. The sequence is that of Mannonate dehydratase from Brucella canis (strain ATCC 23365 / NCTC 10854 / RM-666).